A 458-amino-acid polypeptide reads, in one-letter code: Histone acetyltransferase Tip60 homolog (458 aa).

A disordered region spans residues 1–24 (MTEPKKEIIEDENHGISKKIPTDP). A Tudor-knot domain is found at 30-86 (VTEGCRLLVMMASQEEERWAEVISRCRAANGSIKFYVHYIDCNRRLDEWVQSDRLNL). The segment at 94 to 123 (KGGKKGAHLREENRDSNENEGKKSGRKRKI) is disordered. Residues 101-116 (HLREENRDSNENEGKK) show a composition bias toward basic and acidic residues. The 279-residue stretch at 168-446 (TRIRNVECIE…INPAALQWRP (279 aa)) folds into the MYST-type HAT domain. Residues 201–226 (IYICEFCLKYLKSKTCLKRHMEKCAM) form a C2HC MYST-type zinc finger. N6-acetyllysine; by autocatalysis is present on lysine 268. Residues 311–313 (ILV) and 318–324 (QKKGYGS) each bind acetyl-CoA. The active-site Proton donor/acceptor is the glutamate 344. Residues serine 348 and serine 357 each contribute to the acetyl-CoA site.

It belongs to the MYST (SAS/MOZ) family. In terms of assembly, interacts with transcription-associated protein trr-1. Probably a component of a complex with histone acetyltransferase (HAT) activity, at least composed of mys-1 and trr-1. In terms of processing, autoacetylation at Lys-268 is required for binding histones with high affinity and for proper function.

Its subcellular location is the nucleus. The enzyme catalyses L-lysyl-[protein] + acetyl-CoA = N(6)-acetyl-L-lysyl-[protein] + CoA + H(+). In terms of biological role, probable catalytic subunit of the Tip60 chromatin-remodeling complex. Plays a role in acetylation of nucleosomal histone H4 and perhaps also H2A, probably acting as a component of the Tip60 histone acetyltransferase complex. Acts in the determination of vulval and distal tip cell (DTC) precursor cell fates. Involved in the positive regulation of transcription factor daf-16, probably acting by histone acetylation; thereby modulating stress resistance. This is Histone acetyltransferase Tip60 homolog from Caenorhabditis elegans.